The chain runs to 778 residues: Actin-binding LIM protein 1 (778 aa).

LIM zinc-binding domains lie at 97–156, 156–216, 224–283, and 283–343; these read IHCH…MYGT, TRCH…MSSS, SNCA…LFGV, and VKCE…TKTE. Ser-216 bears the Phosphoserine mark. The disordered stretch occupies residues 339–370; it reads STKTEEKLRPTRTSSESIYSRPGSSIPGSPGH. Positions 360 to 369 are enriched in low complexity; the sequence is PGSSIPGSPG. At Ser-367 the chain carries Phosphoserine. Tyr-373 and Tyr-396 each carry phosphotyrosine. 2 disordered regions span residues 414–510 and 552–597; these read YDDK…QAPK and AAQA…EELL. Phosphoserine occurs at positions 422, 426, and 431. A compositionally biased stretch (polar residues) spans 423 to 434; it reads LGESPRTLSPTP. Thr-433 is subject to Phosphothreonine. Phosphoserine is present on Ser-435. Phosphotyrosine is present on Tyr-439. The segment covering 449 to 474 has biased composition (polar residues); sequence RSTSQGSINSPVYSRHSYTPTTSRSP. Ser-452, Ser-455, Ser-458, Ser-498, and Ser-587 each carry phosphoserine. Positions 590–614 form a coiled coil; the sequence is EEDDEELLRRRQLQEEQLMKLNSGL. A Glycyl lysine isopeptide (Lys-Gly) (interchain with G-Cter in SUMO2) cross-link involves residue Lys-620. Phosphoserine occurs at positions 640, 655, 677, and 706. Residues 710–778 form the HP domain; the sequence is MLEPKIFPYE…NDMKKKAKLF (69 aa).

As to quaternary structure, binds F-actin. Interacts with ABRA. In terms of tissue distribution, detected in liver, heart, skeletal muscle, brain and retina, where it is concentrated in the inner segment and in the outer plexiform layers.

Its subcellular location is the cytoplasm. The protein localises to the cytoskeleton. In terms of biological role, may act as scaffold protein. May play a role in the development of the retina. Has been suggested to play a role in axon guidance. This chain is Actin-binding LIM protein 1 (ABLIM1), found in Homo sapiens (Human).